The following is a 614-amino-acid chain: Pyruvate decarboxylase 2 (614 aa).

Residues aspartate 50 and histidine 137 each coordinate substrate. The segment at 415 to 523 is thiamine pyrophosphate binding; that stretch reads DSWFNCQKLK…FLINNGGYTI (109 aa). Mg(2+) contacts are provided by aspartate 491, asparagine 518, and glycine 520. Glutamate 524 is a binding site for substrate.

Belongs to the TPP enzyme family. In terms of assembly, homotetramer. A metal cation is required as a cofactor. It depends on thiamine diphosphate as a cofactor. As to expression, pollen.

The catalysed reaction is a 2-oxocarboxylate + H(+) = an aldehyde + CO2. The polypeptide is Pyruvate decarboxylase 2 (PDC2) (Nicotiana tabacum (Common tobacco)).